We begin with the raw amino-acid sequence, 173 residues long: NADH-quinone oxidoreductase subunit 6 (173 aa).

[4Fe-4S] cluster is bound by residues cysteine 53, cysteine 54, cysteine 118, and cysteine 148.

The protein belongs to the complex I 20 kDa subunit family. NDH-1 is composed of at least 14 different subunits, Nqo1 to Nqo14. The complex has a L-shaped structure, with the hydrophobic arm (subunits Nqo7, Nqo8, Nqo10 to Nqo14) embedded in the inner membrane and the hydrophilic peripheral arm (subunits Nqo1 to Nqo6, Nqo9) protruding into the bacterial cytoplasm. The hydrophilic domain contains all the redox centers. The cofactor is [4Fe-4S] cluster.

It is found in the cell inner membrane. It catalyses the reaction a quinone + NADH + 5 H(+)(in) = a quinol + NAD(+) + 4 H(+)(out). In terms of biological role, NDH-1 shuttles electrons from NADH, via FMN and iron-sulfur (Fe-S) centers, to quinones in the respiratory chain. The immediate electron acceptor for the enzyme in this species is believed to be ubiquinone. Couples the redox reaction to proton translocation (for every two electrons transferred, four hydrogen ions are translocated across the cytoplasmic membrane), and thus conserves the redox energy in a proton gradient. The chain is NADH-quinone oxidoreductase subunit 6 (nqo6) from Paracoccus denitrificans.